Here is a 275-residue protein sequence, read N- to C-terminus: Reticulon-like protein B1 (275 aa).

Composition is skewed to basic and acidic residues over residues 1-10 (MAEEHKHDES) and 20-38 (VVERESLMDKISEKIHHGG). Residues 1–68 (MAEEHKHDES…PSSPSSSMKS (68 aa)) are disordered. N-acetylalanine is present on Ala-2. Over residues 59–68 (PSSPSSSMKS) the composition is skewed to low complexity. The Reticulon domain occupies 89 to 274 (PADIFMWKNK…PLGPLKNKKK (186 aa)). 3 helical membrane passes run 99 to 119 (KMSGGVLGGATAAWVVFELME), 120 to 140 (YHLLTLLCHVMIVVLAVLFLW), and 194 to 214 (FLIAIAGLWVLSILGGCFNFL).

As to quaternary structure, interacts with VirB2. In terms of tissue distribution, predominantly expressed in root tissues.

The protein localises to the endoplasmic reticulum membrane. It localises to the cell membrane. Plays a role in the Agrobacterium-mediated plant transformation via its interaction with VirB2, the major component of the T-pilus. In Arabidopsis thaliana (Mouse-ear cress), this protein is Reticulon-like protein B1 (RTNLB1).